The primary structure comprises 184 residues: MGLEEKLPGGILLSTVEKVAGYVRKGSLWPATFGLACCAIEMMATAGPRFDISRFGMERFSATPRQADLMIVAGRVSQKMAPVLRQIYDQMAEPKWVLAMGVCASSGGMFNNYAVVQGVDHVVPVDIYLPGCPPRPEMLLHAILKLHDKIQQMPLGVNREEAIREAEQAAMALTPTIELKGLLR.

[4Fe-4S] cluster contacts are provided by Cys-37, Cys-38, Cys-103, and Cys-132.

Belongs to the complex I 20 kDa subunit family. NDH-1 is composed of 14 different subunits. Subunits NuoB, C, D, E, F, and G constitute the peripheral sector of the complex. [4Fe-4S] cluster serves as cofactor.

It is found in the cell membrane. It catalyses the reaction a quinone + NADH + 5 H(+)(in) = a quinol + NAD(+) + 4 H(+)(out). NDH-1 shuttles electrons from NADH, via FMN and iron-sulfur (Fe-S) centers, to quinones in the respiratory chain. The immediate electron acceptor for the enzyme in this species is believed to be a menaquinone. Couples the redox reaction to proton translocation (for every two electrons transferred, four hydrogen ions are translocated across the cytoplasmic membrane), and thus conserves the redox energy in a proton gradient. In Mycolicibacterium gilvum (strain PYR-GCK) (Mycobacterium gilvum (strain PYR-GCK)), this protein is NADH-quinone oxidoreductase subunit B.